Here is a 680-residue protein sequence, read N- to C-terminus: Protein terminal ear1 homolog (680 aa).

One can recognise an RRM domain in the interval 223 to 295; sequence SLVVLNSLPA…RRLVVEYTRP (73 aa). Disordered stretches follow at residues 294-415 and 593-680; these read RPSL…SWRG and TEPV…GYTD. Low complexity-rich tracts occupy residues 328-340 and 379-403; these read PSQS…SGSG and SAAA…KQSQ. Residues 404-413 are compositionally biased toward gly residues; the sequence is KGGGGRGGSW. Composition is skewed to low complexity over residues 602-621 and 634-648; these read SPAP…CAAS and SSSG…SSNA. Positions 656–666 are enriched in basic and acidic residues; that stretch reads HGETGGDRGDD.

In terms of tissue distribution, highly expressed in shoot apex and inflorescence apex, at intermediate levels in roots and at low levels in leaf blade and leaf sheath.

Probable RNA-binding protein. Involved in the regular timing (plastochron) of lateral organs formation. May regulate the rate of leaf initiation and the duration of vegetative phase. Seems to be redundant to the function of PLASTOCHRON1, but to act in an independent pathway. The polypeptide is Protein terminal ear1 homolog (PLA2) (Oryza sativa subsp. indica (Rice)).